A 203-amino-acid polypeptide reads, in one-letter code: Holliday junction branch migration complex subunit RuvA (203 aa).

The tract at residues 1 to 63 (MYEYLKGLVT…DTDITLFGFY (63 aa)) is domain I. Positions 64–142 (DLDEKQLFQK…DLEQSATLVG (79 aa)) are domain II. The tract at residues 143–153 (QTAIDLGSQGD) is flexible linker. Residues 153–203 (DSPELSDALAALSALGYSAREVKAITPKLTDFAAQTTDQYLREGLRLLMKK) form a domain III region.

This sequence belongs to the RuvA family. In terms of assembly, homotetramer. Forms an RuvA(8)-RuvB(12)-Holliday junction (HJ) complex. HJ DNA is sandwiched between 2 RuvA tetramers; dsDNA enters through RuvA and exits via RuvB. An RuvB hexamer assembles on each DNA strand where it exits the tetramer. Each RuvB hexamer is contacted by two RuvA subunits (via domain III) on 2 adjacent RuvB subunits; this complex drives branch migration. In the full resolvosome a probable DNA-RuvA(4)-RuvB(12)-RuvC(2) complex forms which resolves the HJ.

It is found in the cytoplasm. The RuvA-RuvB-RuvC complex processes Holliday junction (HJ) DNA during genetic recombination and DNA repair, while the RuvA-RuvB complex plays an important role in the rescue of blocked DNA replication forks via replication fork reversal (RFR). RuvA specifically binds to HJ cruciform DNA, conferring on it an open structure. The RuvB hexamer acts as an ATP-dependent pump, pulling dsDNA into and through the RuvAB complex. HJ branch migration allows RuvC to scan DNA until it finds its consensus sequence, where it cleaves and resolves the cruciform DNA. The polypeptide is Holliday junction branch migration complex subunit RuvA (Latilactobacillus sakei subsp. sakei (strain 23K) (Lactobacillus sakei subsp. sakei)).